We begin with the raw amino-acid sequence, 182 residues long: UPF0301 protein NMCC_1249 (182 aa).

The protein belongs to the UPF0301 (AlgH) family.

The chain is UPF0301 protein NMCC_1249 from Neisseria meningitidis serogroup C (strain 053442).